We begin with the raw amino-acid sequence, 242 residues long: Type III pantothenate kinase (242 aa).

Residue 5 to 12 (DLGNTRLK) participates in ATP binding. Substrate-binding positions include Y94 and 100 to 103 (GCDR). Residue D102 is the Proton acceptor of the active site. An ATP-binding site is contributed by T124. A substrate-binding site is contributed by T175.

The protein belongs to the type III pantothenate kinase family. Homodimer. The cofactor is NH4(+). It depends on K(+) as a cofactor.

It localises to the cytoplasm. The enzyme catalyses (R)-pantothenate + ATP = (R)-4'-phosphopantothenate + ADP + H(+). The protein operates within cofactor biosynthesis; coenzyme A biosynthesis; CoA from (R)-pantothenate: step 1/5. In terms of biological role, catalyzes the phosphorylation of pantothenate (Pan), the first step in CoA biosynthesis. The polypeptide is Type III pantothenate kinase (Psychrobacter arcticus (strain DSM 17307 / VKM B-2377 / 273-4)).